The following is a 224-amino-acid chain: uncharacterized protein (224 aa).

Transmembrane regions (helical) follow at residues 32-52 (ILTL…PLVV), 60-80 (LFTN…IYFF), 100-120 (IIYL…SGLG), 130-150 (AIAY…LFGF), and 162-182 (LGFS…FGII).

This sequence belongs to the derlin family.

The protein resides in the endoplasmic reticulum membrane. This is an uncharacterized protein from Schizosaccharomyces pombe (strain 972 / ATCC 24843) (Fission yeast).